A 264-amino-acid chain; its full sequence is Pro-opiomelanocortin (264 aa).

Residues 1-26 form the signal peptide; sequence MPRSCCSRSGALLLALLLQASMEVRG. Phe-87 is modified (phenylalanine amide). 2 disordered regions span residues 88-204 and 219-238; these read GRRN…DLEH and RMEH…GGFM. N-linked (GlcNAc...) asparagine glycosylation occurs at Asn-91. 2 stretches are compositionally biased toward basic and acidic residues: residues 99–122 and 130–142; these read QKRE…EPRG and REGK…EHFR. At Glu-131 the chain carries Glutamic acid 1-amide. An N-acetylserine; in Corticotropin modification is found at Ser-135. Val-147 is modified (valine amide). Phosphoserine is present on Ser-165. Over residues 172–186 the composition is skewed to basic and acidic residues; that stretch reads EFKRELTGQRPRAGD. Low complexity predominate over residues 189–199; it reads DGPADDGAGPR. Basic and acidic residues predominate over residues 219 to 234; that stretch reads RMEHFRWGSPPKDKRY.

This sequence belongs to the POMC family. Post-translationally, specific enzymatic cleavages at paired basic residues yield the different active peptides. As to expression, ACTH and MSH are produced by the pituitary gland.

The protein localises to the secreted. In terms of biological role, stimulates the adrenal glands to release cortisol. Anorexigenic peptide. Increases the pigmentation of skin by increasing melanin production in melanocytes. Functionally, increases the pigmentation of skin by increasing melanin production in melanocytes. Its function is as follows. Endogenous orexigenic opiate. In terms of biological role, endogenous opiate. This is Pro-opiomelanocortin (POMC) from Macaca nemestrina (Pig-tailed macaque).